A 160-amino-acid polypeptide reads, in one-letter code: Cytochrome b6-f complex subunit 4 (160 aa).

3 helical membrane passes run 36–56, 95–115, and 131–151; these read LLYV…ALAV, LLGV…PFIE, and TVFL…ALPL.

Belongs to the cytochrome b family. PetD subfamily. The 4 large subunits of the cytochrome b6-f complex are cytochrome b6, subunit IV (17 kDa polypeptide, PetD), cytochrome f and the Rieske protein, while the 4 small subunits are PetG, PetL, PetM and PetN. The complex functions as a dimer.

It is found in the cellular thylakoid membrane. Component of the cytochrome b6-f complex, which mediates electron transfer between photosystem II (PSII) and photosystem I (PSI), cyclic electron flow around PSI, and state transitions. This chain is Cytochrome b6-f complex subunit 4, found in Desmonostoc sp. (strain PCC 7906) (Nostoc sp. (strain PCC 7906)).